Here is a 291-residue protein sequence, read N- to C-terminus: Small ribosomal subunit biogenesis GTPase RsgA (291 aa).

In terms of domain architecture, CP-type G spans His-63 to Leu-221. GTP-binding positions include Thr-112–Asp-115 and Gly-164–Thr-172. Residues Cys-245, Cys-250, His-252, and Cys-258 each coordinate Zn(2+).

This sequence belongs to the TRAFAC class YlqF/YawG GTPase family. RsgA subfamily. In terms of assembly, monomer. Associates with 30S ribosomal subunit, binds 16S rRNA. Zn(2+) serves as cofactor.

Its subcellular location is the cytoplasm. One of several proteins that assist in the late maturation steps of the functional core of the 30S ribosomal subunit. Helps release RbfA from mature subunits. May play a role in the assembly of ribosomal proteins into the subunit. Circularly permuted GTPase that catalyzes slow GTP hydrolysis, GTPase activity is stimulated by the 30S ribosomal subunit. The sequence is that of Small ribosomal subunit biogenesis GTPase RsgA from Staphylococcus haemolyticus (strain JCSC1435).